Reading from the N-terminus, the 533-residue chain is 2,3-bisphosphoglycerate-independent phosphoglycerate mutase (533 aa).

2 residues coordinate Mn(2+): Asp-15 and Ser-65. Ser-65 acts as the Phosphoserine intermediate in catalysis. Substrate-binding positions include His-126, 156–157 (RD), Arg-188, Arg-194, 258–261 (RPDR), and Lys-331. Mn(2+) is bound by residues Asp-398, His-402, Asp-439, His-440, and His-457.

It belongs to the BPG-independent phosphoglycerate mutase family. As to quaternary structure, monomer. It depends on Mn(2+) as a cofactor.

The enzyme catalyses (2R)-2-phosphoglycerate = (2R)-3-phosphoglycerate. The protein operates within carbohydrate degradation; glycolysis; pyruvate from D-glyceraldehyde 3-phosphate: step 3/5. Functionally, catalyzes the interconversion of 2-phosphoglycerate and 3-phosphoglycerate. In Nostoc sp. (strain PCC 7120 / SAG 25.82 / UTEX 2576), this protein is 2,3-bisphosphoglycerate-independent phosphoglycerate mutase.